The sequence spans 326 residues: tRNA-dihydrouridine(20/20a) synthase (326 aa).

FMN is bound by residues 11 to 13 (PML) and Q63. C93 serves as the catalytic Proton donor. Residues K132, H165, 205-207 (NGG), and 227-228 (GR) contribute to the FMN site.

Belongs to the Dus family. DusA subfamily. It depends on FMN as a cofactor.

The enzyme catalyses 5,6-dihydrouridine(20) in tRNA + NADP(+) = uridine(20) in tRNA + NADPH + H(+). It carries out the reaction 5,6-dihydrouridine(20) in tRNA + NAD(+) = uridine(20) in tRNA + NADH + H(+). It catalyses the reaction 5,6-dihydrouridine(20a) in tRNA + NADP(+) = uridine(20a) in tRNA + NADPH + H(+). The catalysed reaction is 5,6-dihydrouridine(20a) in tRNA + NAD(+) = uridine(20a) in tRNA + NADH + H(+). Catalyzes the synthesis of 5,6-dihydrouridine (D), a modified base found in the D-loop of most tRNAs, via the reduction of the C5-C6 double bond in target uridines. Specifically modifies U20 and U20a in tRNAs. The chain is tRNA-dihydrouridine(20/20a) synthase from Vibrio vulnificus (strain CMCP6).